The sequence spans 32 residues: Peptide tarsal-less AA (32 aa).

Positions 1-32 (MLDPTGTYRRPRDTQDSRQKRRQDCLDPTGQY) are disordered. Repeat 1 spans residues 2-8 (LDPTGTY). Residues 2 to 32 (LDPTGTYRRPRDTQDSRQKRRQDCLDPTGQY) form a 2 X 7 AA repeats of L-D-P-T-G-[TQ]-Y region. Over residues 10–25 (RPRDTQDSRQKRRQDC) the composition is skewed to basic and acidic residues. Repeat 2 spans residues 26 to 32 (LDPTGQY).

The protein resides in the cytoplasm. It is found in the nucleus. Its function is as follows. One of four peptides (tal-1A, tal-2A, tal-3A and tal-AA) produced from a polycistronic gene that function redundantly in several developmental processes. Required in early stages of leg development for the intercalation of the tarsal segments during the mid-third instar stage and later for tarsal joint formation. Promotes the post-translational modification of ovo isoform B (svb) into its active form which in turn initiates trichome development and promotes tarsal joint development. This is likely due to recruitment of the E3 ubiquitin-protein ligase Ubr3 to svb for ubiquitination of its N-terminus, converting svb into a transcriptional activator. Also enhances interaction of Ubr3 with Diap1. Required for correct wing and leg formation through its regulation of several genes including those in the Notch signaling pathway. Essential for denticle formation and may have a role in the developmental timing of trichome differentiation. Essential for the development of taenidial folds in the trachea. The sequence is that of Peptide tarsal-less AA from Drosophila melanogaster (Fruit fly).